The sequence spans 125 residues: Glycine cleavage system H protein (125 aa).

Residues 22 to 104 (SYVIGITDFA…YDTGWILKLE (83 aa)) enclose the Lipoyl-binding domain. Residue Lys-63 is modified to N6-lipoyllysine.

It belongs to the GcvH family. The glycine cleavage system is composed of four proteins: P, T, L and H. It depends on (R)-lipoate as a cofactor.

In terms of biological role, the glycine cleavage system catalyzes the degradation of glycine. The H protein shuttles the methylamine group of glycine from the P protein to the T protein. Its function is as follows. Is also involved in protein lipoylation via its role as an octanoyl/lipoyl carrier protein intermediate. In Listeria monocytogenes serotype 4b (strain CLIP80459), this protein is Glycine cleavage system H protein.